The chain runs to 620 residues: Glutathione-regulated potassium-efflux system protein KefC (620 aa).

Transmembrane regions (helical) follow at residues 4–24, 26–46, 54–74, 90–110, 114–134, 149–169, 178–198, 218–238, 270–290, 294–314, 327–347, and 359–379; these read HTLL…PIAV, LGLG…PWGL, SILH…GLEL, GALQ…FLGL, VAEL…MQAM, FAVL…IPLL, LGAF…VVLL, VFSA…EEVG, GLLL…GTLV, LRIL…LWLV, WFAV…GAAQ, and ALTL…VLLT. In terms of domain architecture, RCK N-terminal spans 399–518; sequence QPRVIVAGFG…AGVAMPERET (120 aa). The segment at 599 to 620 is disordered; that stretch reads QGTAEGKHSGEAADEPEVKPSI.

It belongs to the monovalent cation:proton antiporter 2 (CPA2) transporter (TC 2.A.37) family. KefC subfamily. Homodimer. Interacts with the regulatory subunit KefF.

It is found in the cell inner membrane. Pore-forming subunit of a potassium efflux system that confers protection against electrophiles. Catalyzes K(+)/H(+) antiport. The sequence is that of Glutathione-regulated potassium-efflux system protein KefC from Salmonella schwarzengrund (strain CVM19633).